Reading from the N-terminus, the 68-residue chain is DNA-directed RNA polymerase subunit omega (68 aa).

The protein belongs to the RNA polymerase subunit omega family. As to quaternary structure, the RNAP catalytic core consists of 2 alpha, 1 beta, 1 beta' and 1 omega subunit. When a sigma factor is associated with the core the holoenzyme is formed, which can initiate transcription.

It carries out the reaction RNA(n) + a ribonucleoside 5'-triphosphate = RNA(n+1) + diphosphate. In terms of biological role, promotes RNA polymerase assembly. Latches the N- and C-terminal regions of the beta' subunit thereby facilitating its interaction with the beta and alpha subunits. The chain is DNA-directed RNA polymerase subunit omega from Listeria monocytogenes serotype 4b (strain CLIP80459).